We begin with the raw amino-acid sequence, 275 residues long: Myb/SANT-like DNA-binding domain-containing protein 3 (275 aa).

The Myb-like domain occupies Phe13–Lys78. A phosphoserine mark is found at Ser96 and Ser98. Lys154 is covalently cross-linked (Glycyl lysine isopeptide (Lys-Gly) (interchain with G-Cter in SUMO2)). Residues Gln211–Lys247 are a coiled coil. Position 274 is a phosphoserine (Ser274).

This sequence belongs to the MSANTD3 family. Expressed in brain.

This Homo sapiens (Human) protein is Myb/SANT-like DNA-binding domain-containing protein 3 (MSANTD3).